A 206-amino-acid polypeptide reads, in one-letter code: Insecticyanin-B (206 aa).

The N-terminal stretch at 1-17 is a signal peptide; that stretch reads MQRFLVFTIVAVATAAA. Intrachain disulfides connect cysteine 26-cysteine 136 and cysteine 60-cysteine 192.

The protein belongs to the calycin superfamily. Lipocalin family. Homotetramer. Synthesized only in the caterpillars, apparently by the epidermis and secreted into the hemolymph. The protein is passed over from the larval hemolymph to that of pupae and adults and is sequestered in the eggs.

The protein resides in the secreted. Functionally, this protein binds a chromophore: biliverdin IX, isomer gamma. Mixed with lipoprotein-bound carotenes, this blue protein provides hornworms with their green cryptic coloration which serves a camouflage. The polypeptide is Insecticyanin-B (INSB) (Manduca sexta (Tobacco hawkmoth)).